The sequence spans 922 residues: Phosphoenolpyruvate carboxylase (922 aa).

Residues 1–20 are disordered; that stretch reads MTKTLHARPSAATDTTFAPP. Catalysis depends on residues histidine 142 and lysine 581.

Belongs to the PEPCase type 1 family. Mg(2+) serves as cofactor.

It catalyses the reaction oxaloacetate + phosphate = phosphoenolpyruvate + hydrogencarbonate. Its function is as follows. Forms oxaloacetate, a four-carbon dicarboxylic acid source for the tricarboxylic acid cycle. The protein is Phosphoenolpyruvate carboxylase (ppc) of Methylorubrum extorquens (strain ATCC 14718 / DSM 1338 / JCM 2805 / NCIMB 9133 / AM1) (Methylobacterium extorquens).